The chain runs to 467 residues: FK506-binding protein 4 (467 aa).

Disordered regions lie at residues 64–163 (KATG…GDDD) and 208–357 (GNFV…KPTS). Acidic residues-rich tracts occupy residues 71–80 (DDDDEEEDEY), 147–163 (SDEEESDEESDCCGDDD), and 213–254 (PEDD…DELD). Basic and acidic residues-rich tracts occupy residues 271–287 (APKLVDTSKKGKKRPAE) and 312–332 (QKVEEAKKEEPKKETKSDKKV). Residues 381–467 (GDRVGMRYIG…IFDVKLLEIK (87 aa)) enclose the PPIase FKBP-type domain.

The protein belongs to the FKBP-type PPIase family. FKBP3/4 subfamily. Binds to histones H3 and H4.

It localises to the nucleus. The catalysed reaction is [protein]-peptidylproline (omega=180) = [protein]-peptidylproline (omega=0). Inhibited by both FK506 and rapamycin. PPIase that acts as a histone chaperone. Histone proline isomerase that increases the rate of cis-trans isomerization at prolines on the histone H3 N-terminal tail. Proline isomerization influences H3 methylation thereby regulating gene expression. The sequence is that of FK506-binding protein 4 (fkr-4) from Neurospora crassa (strain ATCC 24698 / 74-OR23-1A / CBS 708.71 / DSM 1257 / FGSC 987).